The following is a 112-amino-acid chain: Large ribosomal subunit protein bL17 (112 aa).

Belongs to the bacterial ribosomal protein bL17 family. As to quaternary structure, part of the 50S ribosomal subunit. Contacts protein L32.

This is Large ribosomal subunit protein bL17 from Desulforudis audaxviator (strain MP104C).